Consider the following 511-residue polypeptide: Maturase K (511 aa).

It belongs to the intron maturase 2 family. MatK subfamily.

The protein resides in the plastid. It is found in the chloroplast. Its function is as follows. Usually encoded in the trnK tRNA gene intron. Probably assists in splicing its own and other chloroplast group II introns. This is Maturase K from Trifolium burchellianum (Wild clover).